A 60-amino-acid polypeptide reads, in one-letter code: Potassium channel toxin alpha-KTx 29.1 (60 aa).

The N-terminal stretch at 1-28 is a signal peptide; sequence MKSVCGVLIILVVLTTMLSISTFSTVGA. 3 cysteine pairs are disulfide-bonded: Cys-32–Cys-51, Cys-40–Cys-56, and Cys-44–Cys-58.

This sequence belongs to the short scorpion toxin superfamily. Potassium channel inhibitor family. Alpha-KTx 29 subfamily. Expressed by the venom gland.

Its subcellular location is the secreted. Its function is as follows. Weakly inhibits the Kv1.3/KCNA3 channel (1 uM of the toxin inhibits currents by 13.2%) and Kv7.1/KCNQ1 channel (10 uM of the toxin inhibits currents by 27.7%). The polypeptide is Potassium channel toxin alpha-KTx 29.1 (Lychas mucronatus (Chinese swimming scorpion)).